The sequence spans 395 residues: MEMAESIPCNSVVGGNFKEVSPEKVIRFKPPLYKQRYQFVRDLVDRHEPKKVADLGCGDAKLLKLLKIYPCIQLLVGVDINEEKLHSNGHRLSPYLGEFVKPRDLDLTVTLYHGSVVERDSRLLGFDLITCIELIEHLDSDDLARFPDVVFGYLSPAMVVISTPNAEFNPLFPTVTLRDADHKFEWSRMEFQTWALHVANCYNYRVEFTGVGTPPAGSEHVGYCTQIGVFTKNGGKLSKPSVSQQCDQHVYKPVYTTSYPSLQQEKVLKFVLVGELLIQVDRLRLRYQRMLRDREKDRGPKPGDMDSCPAPHLLLGAVFTEAEKARIESSPKPFCEGEKFYIPLQRLLTYPKLHRLCADEDRVRSLIADSVCLSSDGSAVVVDLHNSWDYRPEEN.

2 residues coordinate S-adenosyl-L-methionine: D79 and S115. E133, E136, H137, and H182 together coordinate Mg(2+).

The protein belongs to the methyltransferase superfamily. HEN1 family. It depends on Mg(2+) as a cofactor. As to expression, specifically expressed in testis.

It is found in the cytoplasm. It catalyses the reaction small RNA 3'-end nucleotide + S-adenosyl-L-methionine = small RNA 3'-end 2'-O-methylnucleotide + S-adenosyl-L-homocysteine + H(+). Functionally, methyltransferase that adds a 2'-O-methyl group at the 3'-end of piRNAs, a class of 24 to 30 nucleotide RNAs that are generated by a Dicer-independent mechanism and are primarily derived from transposons and other repeated sequence elements. This probably protects the 3'-end of piRNAs from uridylation activity and subsequent degradation. Stabilization of piRNAs is essential for gametogenesis. The sequence is that of Small RNA 2'-O-methyltransferase (Henmt1) from Mus musculus (Mouse).